The primary structure comprises 23 residues: Melittin-related peptide AK-23-1 (23 aa).

Residue K23 is modified to Lysine amide.

Expressed by the skin glands.

The protein resides in the secreted. This chain is Melittin-related peptide AK-23-1, found in Rana arvalis (Moor frog).